A 340-amino-acid chain; its full sequence is Protein-lysine N-methyltransferase EEF2KMT (340 aa).

Methionine 1 bears the N-acetylmethionine mark. Residues tryptophan 139, 165-167, tryptophan 238, and alanine 257 each bind S-adenosyl-L-methionine; that span reads GSG.

The protein belongs to the class I-like SAM-binding methyltransferase superfamily. EEF2KMT family. In terms of assembly, interacts with FAM86B2 and FAM86C1P.

It is found in the cytoplasm. The catalysed reaction is L-lysyl-[protein] + 3 S-adenosyl-L-methionine = N(6),N(6),N(6)-trimethyl-L-lysyl-[protein] + 3 S-adenosyl-L-homocysteine + 3 H(+). In terms of biological role, catalyzes the trimethylation of eukaryotic elongation factor 2 (EEF2) on 'Lys-525'. This chain is Protein-lysine N-methyltransferase EEF2KMT (EEF2KMT), found in Bos taurus (Bovine).